Here is a 157-residue protein sequence, read N- to C-terminus: 6,7-dimethyl-8-ribityllumazine synthase 2 (157 aa).

Residues Trp-21, 55–57 (AYE), and 79–81 (FVV) contribute to the 5-amino-6-(D-ribitylamino)uracil site. Arg-87 functions as the Proton donor in the catalytic mechanism. Ser-112 lines the 5-amino-6-(D-ribitylamino)uracil pocket. (2S)-2-hydroxy-3-oxobutyl phosphate is bound at residue His-126.

Belongs to the DMRL synthase family. As to quaternary structure, homodecamer, arranged as a dimer of pentamers.

The catalysed reaction is (2S)-2-hydroxy-3-oxobutyl phosphate + 5-amino-6-(D-ribitylamino)uracil = 6,7-dimethyl-8-(1-D-ribityl)lumazine + phosphate + 2 H2O + H(+). It functions in the pathway cofactor biosynthesis; riboflavin biosynthesis; riboflavin from 2-hydroxy-3-oxobutyl phosphate and 5-amino-6-(D-ribitylamino)uracil: step 1/2. Its function is as follows. Catalyzes the formation of 6,7-dimethyl-8-ribityllumazine by condensation of 5-amino-6-(D-ribitylamino)uracil with 3,4-dihydroxy-2-butanone 4-phosphate. This is the penultimate step in the biosynthesis of riboflavin. The sequence is that of 6,7-dimethyl-8-ribityllumazine synthase 2 (ribH2) from Mesorhizobium japonicum (strain LMG 29417 / CECT 9101 / MAFF 303099) (Mesorhizobium loti (strain MAFF 303099)).